We begin with the raw amino-acid sequence, 497 residues long: mRNA cleavage and polyadenylation factor CLP1 (497 aa).

ATP-binding positions include glutamate 34, lysine 73, and 157–162; that span reads HSGKTS.

Belongs to the Clp1 family. Clp1 subfamily. As to quaternary structure, component of a pre-mRNA cleavage factor complex. Interacts directly with PCF11.

It is found in the nucleus. In terms of biological role, required for endonucleolytic cleavage during polyadenylation-dependent pre-mRNA 3'-end formation. The sequence is that of mRNA cleavage and polyadenylation factor CLP1 from Debaryomyces hansenii (strain ATCC 36239 / CBS 767 / BCRC 21394 / JCM 1990 / NBRC 0083 / IGC 2968) (Yeast).